The primary structure comprises 325 residues: ATP synthase gamma chain (325 aa).

It belongs to the ATPase gamma chain family. In terms of assembly, F-type ATPases have 2 components, CF(1) - the catalytic core - and CF(0) - the membrane proton channel. CF(1) has five subunits: alpha(3), beta(3), gamma(1), delta(1), epsilon(1). CF(0) has three main subunits: a, b and c.

Its subcellular location is the cell membrane. Its function is as follows. Produces ATP from ADP in the presence of a proton gradient across the membrane. The gamma chain is believed to be important in regulating ATPase activity and the flow of protons through the CF(0) complex. In Corynebacterium glutamicum (strain ATCC 13032 / DSM 20300 / JCM 1318 / BCRC 11384 / CCUG 27702 / LMG 3730 / NBRC 12168 / NCIMB 10025 / NRRL B-2784 / 534), this protein is ATP synthase gamma chain.